A 317-amino-acid polypeptide reads, in one-letter code: Homoserine kinase (317 aa).

95–105 (PHSRGLGSSAA) is an ATP binding site.

The protein belongs to the GHMP kinase family. Homoserine kinase subfamily.

It is found in the cytoplasm. It carries out the reaction L-homoserine + ATP = O-phospho-L-homoserine + ADP + H(+). Its pathway is amino-acid biosynthesis; L-threonine biosynthesis; L-threonine from L-aspartate: step 4/5. Its function is as follows. Catalyzes the ATP-dependent phosphorylation of L-homoserine to L-homoserine phosphate. This Mycolicibacterium smegmatis (strain ATCC 700084 / mc(2)155) (Mycobacterium smegmatis) protein is Homoserine kinase.